The chain runs to 772 residues: Carnitine O-palmitoyltransferase 1, muscle isoform (772 aa).

Topologically, residues 1–47 (MAEAHQAVAFQFTVTPDGVDFRLSREALKHVYLSGINSWKKRLIRIK) are cytoplasmic. Residues 48–73 (NGILRGVYPGSPTSWLVVIMATVGSS) traverse the membrane as a helical segment. Over 74-102 (FCNVDISLGLVSCIQRCLPQGCGPYQTPQ) the chain is Mitochondrial intermembrane. The helical transmembrane segment at 103–122 (TRALLSMAIFSTGVWVTGIF) threads the bilayer. Topologically, residues 123–772 (FFRQTLKLLL…DLFQVPKAYS (650 aa)) are cytoplasmic. Catalysis depends on H473, which acts as the Proton acceptor. 555–567 (GKGLIKKCRTSPD) is a CoA binding site. 2 residues coordinate (R)-carnitine: Y589 and T602.

The protein belongs to the carnitine/choline acetyltransferase family. In terms of tissue distribution, strong expression in heart and skeletal muscle. No expression in liver and kidney.

The protein localises to the mitochondrion outer membrane. The enzyme catalyses (R)-carnitine + hexadecanoyl-CoA = O-hexadecanoyl-(R)-carnitine + CoA. Its pathway is lipid metabolism; fatty acid beta-oxidation. Its function is as follows. Catalyzes the transfer of the acyl group of long-chain fatty acid-CoA conjugates onto carnitine, an essential step for the mitochondrial uptake of long-chain fatty acids and their subsequent beta-oxidation in the mitochondrion. The protein is Carnitine O-palmitoyltransferase 1, muscle isoform (CPT1B) of Homo sapiens (Human).